The primary structure comprises 629 residues: tRNA uridine 5-carboxymethylaminomethyl modification enzyme MnmG (629 aa).

Position 13 to 18 (13 to 18 (GGGHAG)) interacts with FAD. An NAD(+)-binding site is contributed by 273–287 (GPRYCPSIEDKVNRF).

This sequence belongs to the MnmG family. In terms of assembly, homodimer. Heterotetramer of two MnmE and two MnmG subunits. FAD is required as a cofactor.

It localises to the cytoplasm. Functionally, NAD-binding protein involved in the addition of a carboxymethylaminomethyl (cmnm) group at the wobble position (U34) of certain tRNAs, forming tRNA-cmnm(5)s(2)U34. In Shewanella pealeana (strain ATCC 700345 / ANG-SQ1), this protein is tRNA uridine 5-carboxymethylaminomethyl modification enzyme MnmG.